A 536-amino-acid polypeptide reads, in one-letter code: DEAD-box ATP-dependent RNA helicase 26 (536 aa).

The disordered stretch occupies residues 1–44; it reads MMSGGPSDATHRKRRRRRGPKGSGVDGPSIPRAVTTNGAGPEEE. Over residues 11–20 the composition is skewed to basic residues; that stretch reads HRKRRRRRGP. The short motif at 74-102 is the Q motif element; that stretch reads TRFDQCPVSPLSLKAIKDAGYEKMTQVQE. The 178-residue stretch at 105–282 folds into the Helicase ATP-binding domain; the sequence is LPIILQGEDV…HIAMKRGYKF (178 aa). 118 to 125 lines the ATP pocket; the sequence is AKTGTGKT. Residues 230 to 233 carry the DEAD box motif; that stretch reads DEAD. The 151-residue stretch at 316–466 folds into the Helicase C-terminal domain; the sequence is VLKKHIAEDA…SIQTGVKDAL (151 aa).

It belongs to the DEAD box helicase family.

The catalysed reaction is ATP + H2O = ADP + phosphate + H(+). This Oryza sativa subsp. japonica (Rice) protein is DEAD-box ATP-dependent RNA helicase 26.